The primary structure comprises 107 residues: Large ribosomal subunit protein uL24 (107 aa).

It belongs to the universal ribosomal protein uL24 family. In terms of assembly, part of the 50S ribosomal subunit.

Its function is as follows. One of two assembly initiator proteins, it binds directly to the 5'-end of the 23S rRNA, where it nucleates assembly of the 50S subunit. Functionally, one of the proteins that surrounds the polypeptide exit tunnel on the outside of the subunit. The sequence is that of Large ribosomal subunit protein uL24 from Natranaerobius thermophilus (strain ATCC BAA-1301 / DSM 18059 / JW/NM-WN-LF).